The primary structure comprises 193 residues: Ribonuclease HII (193 aa).

Residues 15-193 (CIVAGIDEAG…PYHRRSFRCC (179 aa)) enclose the RNase H type-2 domain. A divalent metal cation is bound by residues Asp-21, Glu-22, and Asp-112.

The protein belongs to the RNase HII family. Mn(2+) serves as cofactor. It depends on Mg(2+) as a cofactor.

Its subcellular location is the cytoplasm. The enzyme catalyses Endonucleolytic cleavage to 5'-phosphomonoester.. Endonuclease that specifically degrades the RNA of RNA-DNA hybrids. The polypeptide is Ribonuclease HII (Rickettsia africae (strain ESF-5)).